The primary structure comprises 433 residues: 5-methylthioadenosine/S-adenosylhomocysteine deaminase (433 aa).

2 residues coordinate Zn(2+): H62 and H64. E91, R143, and H183 together coordinate substrate. Position 210 (H210) interacts with Zn(2+). Positions 213 and 298 each coordinate substrate. D298 serves as a coordination point for Zn(2+).

The protein belongs to the metallo-dependent hydrolases superfamily. MTA/SAH deaminase family. Zn(2+) serves as cofactor.

It carries out the reaction S-adenosyl-L-homocysteine + H2O + H(+) = S-inosyl-L-homocysteine + NH4(+). It catalyses the reaction S-methyl-5'-thioadenosine + H2O + H(+) = S-methyl-5'-thioinosine + NH4(+). Functionally, catalyzes the deamination of 5-methylthioadenosine and S-adenosyl-L-homocysteine into 5-methylthioinosine and S-inosyl-L-homocysteine, respectively. Is also able to deaminate adenosine. This is 5-methylthioadenosine/S-adenosylhomocysteine deaminase from Caldanaerobacter subterraneus subsp. tengcongensis (strain DSM 15242 / JCM 11007 / NBRC 100824 / MB4) (Thermoanaerobacter tengcongensis).